A 483-amino-acid chain; its full sequence is FK506-binding protein 4 (483 aa).

Disordered stretches follow at residues 41 to 171 (TAEP…EEFV) and 208 to 371 (TGNY…LKKP). The span at 68–93 (EEDDDEYLDIDGEDSEDDEESDDEEV) shows a compositional bias: acidic residues. Composition is skewed to basic and acidic residues over residues 108–121 (REAAIKKLLEATKE) and 130–150 (ADAKPNGKGKKDSKGKAKASE). 3 stretches are compositionally biased toward acidic residues: residues 151–167 (SDDEKSDEDDEEGEPNF), 216–233 (GQDEEDDEDEEDYSDEEY), and 241–256 (LESDSDYESDELDEID). Basic and acidic residues-rich tracts occupy residues 298–309 (LVAKDKKQAEKQ), 323–344 (ENKDVKKEGKSDKKVQFAKDLE), and 351–370 (AKDKLEKKEEKKDDKADLKK). A PPIase FKBP-type domain is found at 397–483 (GDRVSLRYIG…VFDIKLLEIK (87 aa)).

This sequence belongs to the FKBP-type PPIase family. FKBP3/4 subfamily. In terms of assembly, binds to histones H3 and H4.

It is found in the nucleus. It carries out the reaction [protein]-peptidylproline (omega=180) = [protein]-peptidylproline (omega=0). Its function is as follows. PPIase that acts as a histone chaperone. Histone proline isomerase that increases the rate of cis-trans isomerization at prolines on the histone H3 N-terminal tail. Proline isomerization influences H3 methylation thereby regulating gene expression. This chain is FK506-binding protein 4 (FPR4), found in Chaetomium thermophilum (strain DSM 1495 / CBS 144.50 / IMI 039719) (Thermochaetoides thermophila).